Consider the following 342-residue polypeptide: S-adenosylmethionine:tRNA ribosyltransferase-isomerase (342 aa).

Belongs to the QueA family. Monomer.

Its subcellular location is the cytoplasm. The catalysed reaction is 7-aminomethyl-7-carbaguanosine(34) in tRNA + S-adenosyl-L-methionine = epoxyqueuosine(34) in tRNA + adenine + L-methionine + 2 H(+). It participates in tRNA modification; tRNA-queuosine biosynthesis. In terms of biological role, transfers and isomerizes the ribose moiety from AdoMet to the 7-aminomethyl group of 7-deazaguanine (preQ1-tRNA) to give epoxyqueuosine (oQ-tRNA). This Listeria monocytogenes serotype 4b (strain CLIP80459) protein is S-adenosylmethionine:tRNA ribosyltransferase-isomerase.